Here is a 706-residue protein sequence, read N- to C-terminus: Forkhead box protein P2 (706 aa).

Residues 1–28 (MMQESATETISNSSMNQNGMSTLSSQLD) are compositionally biased toward polar residues. Disordered regions lie at residues 1–45 (MMQE…SEVS) and 275–305 (IKHG…ITHH). Over residues 287–296 (SSSTTSTTTS) the composition is skewed to low complexity. Residues 337 to 362 (GVCKWPGCENICEDFGQFLKHLNNEH) form a C2H2-type zinc finger. The leucine-zipper stretch occupies residues 379-400 (VQQLEIQLSKERERLQAMMTHL). Residues 413 to 417 (PLNLV) form a ctbp1-binding region. The segment at residues 495–585 (RPPFTYATLI…SQKITASPTL (91 aa)) is a DNA-binding region (fork-head). Residues 672 to 706 (DDEDCPMSLVTTANHSPELEEDRELEEEPLSEDLE) form a disordered region. Acidic residues predominate over residues 690–706 (LEEDRELEEEPLSEDLE).

Dimerization is required for DNA-binding. In terms of tissue distribution, at stage 15, expressed in the anterior/superior eye field and the caudal branchial arch. At later stages, expression persists in the retina and in the caudal branchial arch. Expressed in the pronephros and the tip of the tail. Beginning with stage 35, expression in the brain is localized to distinct subdomains of the anterior prosencephalon, the medial mesencephalon and to lateral domains of the hindbrain.

The protein resides in the nucleus. Functionally, transcriptional repressor. The protein is Forkhead box protein P2 of Xenopus laevis (African clawed frog).